A 497-amino-acid polypeptide reads, in one-letter code: 3-octaprenyl-4-hydroxybenzoate carboxy-lyase (497 aa).

Mn(2+) is bound at residue Asn-175. Residues 178-180 (IYR), 192-194 (RWL), and 197-198 (RG) contribute to the prenylated FMN site. Glu-241 contributes to the Mn(2+) binding site. Asp-290 serves as the catalytic Proton donor.

Belongs to the UbiD family. As to quaternary structure, homohexamer. It depends on prenylated FMN as a cofactor. Mn(2+) serves as cofactor.

It localises to the cell membrane. It catalyses the reaction a 4-hydroxy-3-(all-trans-polyprenyl)benzoate + H(+) = a 2-(all-trans-polyprenyl)phenol + CO2. It functions in the pathway cofactor biosynthesis; ubiquinone biosynthesis. In terms of biological role, catalyzes the decarboxylation of 3-octaprenyl-4-hydroxy benzoate to 2-octaprenylphenol, an intermediate step in ubiquinone biosynthesis. The protein is 3-octaprenyl-4-hydroxybenzoate carboxy-lyase of Shigella flexneri.